The following is a 368-amino-acid chain: Quinolinate synthase (368 aa).

Iminosuccinate is bound by residues His46 and Ser63. Cys110 contacts [4Fe-4S] cluster. Iminosuccinate-binding positions include 141 to 143 (YVN) and Ser162. Residue Cys230 coordinates [4Fe-4S] cluster. Iminosuccinate-binding positions include 256–258 (HPE) and Thr273. Cys320 is a binding site for [4Fe-4S] cluster.

The protein belongs to the quinolinate synthase family. Type 3 subfamily. Requires [4Fe-4S] cluster as cofactor.

Its subcellular location is the cytoplasm. The catalysed reaction is iminosuccinate + dihydroxyacetone phosphate = quinolinate + phosphate + 2 H2O + H(+). It functions in the pathway cofactor biosynthesis; NAD(+) biosynthesis; quinolinate from iminoaspartate: step 1/1. Functionally, catalyzes the condensation of iminoaspartate with dihydroxyacetone phosphate to form quinolinate. This is Quinolinate synthase from Bacillus anthracis (strain A0248).